Reading from the N-terminus, the 659-residue chain is PAN2-PAN3 deadenylation complex subunit PAN3 (659 aa).

2 disordered regions span residues 1 to 26 (MASAGKPALDDSRRGTGSPKMKAREN) and 103 to 132 (PKAANAAPFQPRSVASRSNTSTPNSRQENI). The C3H1-type zinc finger occupies 26–55 (NAKDTLCRNVTIYGRCRYEDKGCAFNHDPL). Residues 115–132 (SVASRSNTSTPNSRQENI) are compositionally biased toward polar residues. Positions 262 to 522 (QTLPNTQLPA…NIDIFITGIS (261 aa)) are pseudokinase domain. ATP contacts are provided by residues Arg314, 363–370 (DYYPLSKT), and 422–423 (SK). The stretch at 523-561 (SQLMSTFDSALHLDDQLTSDLSRELENGRLVRLMTKLNL) forms a coiled coil. The tract at residues 562–659 (VNERPEYEHD…ALLKPARRMH (98 aa)) is knob domain.

The protein belongs to the protein kinase superfamily. PAN3 family. As to quaternary structure, homodimer. Forms a heterotrimer with a catalytic subunit pan2 to form the poly(A)-nuclease (PAN) deadenylation complex. Interacts (via PAM-2 motif) with poly(A)-binding protein pab1 (via PABC domain), conferring substrate specificity of the enzyme complex.

Its subcellular location is the cytoplasm. Regulatory subunit of the poly(A)-nuclease (PAN) deadenylation complex, one of two cytoplasmic mRNA deadenylases involved in mRNA turnover. PAN specifically shortens poly(A) tails of RNA and the activity is stimulated by poly(A)-binding protein pab1. PAN deadenylation is followed by rapid degradation of the shortened mRNA tails by the CCR4-NOT complex. Deadenylated mRNAs are then degraded by two alternative mechanisms, namely exosome-mediated 3'-5' exonucleolytic degradation, or deadenylation-dependent mRNA decaping and subsequent 5'-3' exonucleolytic degradation by xrn1. May also be involved in post-transcriptional maturation of mRNA poly(A) tails. pan3 acts as a positive regulator for PAN activity, recruiting the catalytic subunit pan2 to mRNA via its interaction with RNA and with pab1. The sequence is that of PAN2-PAN3 deadenylation complex subunit PAN3 from Aspergillus clavatus (strain ATCC 1007 / CBS 513.65 / DSM 816 / NCTC 3887 / NRRL 1 / QM 1276 / 107).